Consider the following 1379-residue polypeptide: Hepatocyte growth factor receptor (1379 aa).

The signal sequence occupies residues methionine 1–glycine 24. At glutamate 25–alanine 931 the chain is on the extracellular side. Positions lysine 27–leucine 514 constitute a Sema domain. Residue asparagine 45 is glycosylated (N-linked (GlcNAc...) asparagine). 4 disulfide bridges follow: cysteine 95-cysteine 101, cysteine 98-cysteine 160, cysteine 133-cysteine 141, and cysteine 171-cysteine 174. A glycan (N-linked (GlcNAc...) asparagine) is linked at asparagine 106. N-linked (GlcNAc...) asparagine glycosylation is found at asparagine 201 and asparagine 357. 2 disulfide bridges follow: cysteine 297–cysteine 362 and cysteine 384–cysteine 396. N-linked (GlcNAc...) asparagine glycosylation is found at asparagine 398 and asparagine 404. 4 cysteine pairs are disulfide-bonded: cysteine 519–cysteine 537, cysteine 525–cysteine 560, cysteine 528–cysteine 544, and cysteine 540–cysteine 550. IPT/TIG domains are found at residues proline 562–valine 654, proline 656–arginine 738, and proline 741–valine 835. Threonine 581 is a glycosylation site (O-linked (Man) threonine). Residues asparagine 606 and asparagine 634 are each glycosylated (N-linked (GlcNAc...) asparagine). O-linked (Man) threonine glycans are attached at residues threonine 675 and threonine 760. Asparagine 784 and asparagine 878 each carry an N-linked (GlcNAc...) asparagine glycan. Residues glycine 932–methionine 954 form a helical membrane-spanning segment. Topologically, residues arginine 955–threonine 1379 are cytoplasmic. The residue at position 964 (serine 964) is a Phosphoserine. Threonine 975 bears the Phosphothreonine mark. Residues serine 988, serine 995, and serine 998 each carry the phosphoserine modification. Position 1001 is a phosphotyrosine (tyrosine 1001). A Protein kinase domain is found at valine 1076–isoleucine 1343. Residues isoleucine 1082–valine 1090 and lysine 1108 each bind ATP. The Proton acceptor role is filled by aspartate 1202. The segment at leucine 1210–threonine 1379 is interaction with RANBP9. At tyrosine 1228 the chain carries Phosphotyrosine. 2 positions are modified to phosphotyrosine; by autocatalysis: tyrosine 1232 and tyrosine 1233. Phosphothreonine is present on threonine 1287. An interaction with MUC20 region spans residues tryptophan 1318 to valine 1357. Phosphotyrosine; by autocatalysis is present on residues tyrosine 1347 and tyrosine 1354. Tyrosine 1363 carries the post-translational modification Phosphotyrosine.

The protein belongs to the protein kinase superfamily. Tyr protein kinase family. Heterodimer made of an alpha chain (50 kDa) and a beta chain (145 kDa) which are disulfide linked. Binds PLXNB1. Interacts when phosphorylated with downstream effectors including STAT3, PIK3R1, SRC, PCLG1, GRB2 and GAB1. When phosphorylated at Tyr-1354, interacts with INPPL1/SHIP2. Interacts with RANBP9 and RANBP10. Interacts with INPP5D/SHIP1. Interacts with SPSB1, SPSB2, SPSB4 and probably SPSB3. SPSB1 binding occurs in the presence and in the absence of HGF, however HGF treatment has a positive effect on this interaction. Interacts with MUC20; prevents interaction with GRB2 and suppresses hepatocyte growth factor-induced cell proliferation. Interacts with GRB10. Interacts with PTPN1 and PTPN2. Interacts with HSP90AA1 and HSP90AB1; the interaction suppresses MET kinase activity. Interacts with tensin TNS3. Interacts (when phosphorylated) with tensin TNS4 (via SH2 domain); the interaction increases MET protein stability by inhibiting MET endocytosis and subsequent lysosomal degradation. In terms of assembly, (Microbial infection) Interacts with L.monocytogenes InlB. InlB probably dimerizes upon binding to MET, which encourages subsequent dimerization of MET. Autophosphorylated in response to ligand binding on Tyr-1232 and Tyr-1233 in the kinase domain leading to further phosphorylation of Tyr-1347 and Tyr-1354 in the C-terminal multifunctional docking site. Dephosphorylated by PTPRJ at Tyr-1347 and Tyr-1363. Dephosphorylated by PTPN1 and PTPN2. In terms of processing, ubiquitinated. Ubiquitination by CBL regulates MET endocytosis, resulting in decreasing plasma membrane receptor abundance, and in endosomal degradation and/or recycling of internalized receptors. Post-translationally, O-mannosylation of IPT/TIG domains by TMEM260 is required for protein maturation. O-mannosylated residues are composed of single mannose glycans that are not elongated or modified. (Microbial infection) Tyrosine phosphorylation is stimulated by L.monocytogenes InlB.

It is found in the membrane. The catalysed reaction is L-tyrosyl-[protein] + ATP = O-phospho-L-tyrosyl-[protein] + ADP + H(+). Its activity is regulated as follows. In its inactive state, the C-terminal tail interacts with the catalytic domain and inhibits the kinase activity. Upon ligand binding, the C-terminal tail is displaced and becomes phosphorylated, thus increasing the kinase activity. Functionally, receptor tyrosine kinase that transduces signals from the extracellular matrix into the cytoplasm by binding to hepatocyte growth factor/HGF ligand. Regulates many physiological processes including proliferation, scattering, morphogenesis and survival. Ligand binding at the cell surface induces autophosphorylation of MET on its intracellular domain that provides docking sites for downstream signaling molecules. Following activation by ligand, interacts with the PI3-kinase subunit PIK3R1, PLCG1, SRC, GRB2, STAT3 or the adapter GAB1. Recruitment of these downstream effectors by MET leads to the activation of several signaling cascades including the RAS-ERK, PI3 kinase-AKT, or PLCgamma-PKC. The RAS-ERK activation is associated with the morphogenetic effects while PI3K/AKT coordinates prosurvival effects. During embryonic development, MET signaling plays a role in gastrulation, development and migration of neuronal precursors, angiogenesis and kidney formation. During skeletal muscle development, it is crucial for the migration of muscle progenitor cells and for the proliferation of secondary myoblasts. In adults, participates in wound healing as well as organ regeneration and tissue remodeling. Also promotes differentiation and proliferation of hematopoietic cells. May regulate cortical bone osteogenesis. (Microbial infection) Acts as a receptor for Listeria monocytogenes internalin InlB, mediating entry of the pathogen into cells. The chain is Hepatocyte growth factor receptor (Met) from Mus musculus (Mouse).